Here is a 1270-residue protein sequence, read N- to C-terminus: Myosin-binding protein C, cardiac-type (1270 aa).

Residue Met-1 is modified to N-acetylmethionine. The disordered stretch occupies residues Met-1–Gly-24. Phosphoserine occurs at positions 47 and 72. Basic and acidic residues predominate over residues Val-94–Ser-105. Positions Val-94–Ile-152 are disordered. Positions Glu-106 to Val-135 are enriched in low complexity. One can recognise an Ig-like C2-type 1 domain in the interval Pro-151–Val-254. Gln-206, His-208, Glu-221, and His-223 together coordinate Zn(2+). A phosphoserine; by PKA and PKC mark is found at Ser-273, Ser-282, and Ser-302. Ser-307 and Ser-423 each carry phosphoserine. Ig-like C2-type domains lie at Ser-358–Pro-448, Pro-449–Lys-539, Lys-540–Glu-629, and Pro-641–Val-767. A disulfide bridge connects residues Cys-432 and Cys-439. 2 positions are modified to phosphoserine: Ser-455 and Ser-546. Thr-603 carries the phosphothreonine modification. Residues Val-683 to Gly-702 are disordered. 2 Fibronectin type-III domains span residues Ala-770–Pro-866 and Glu-868–Ile-963. One can recognise an Ig-like C2-type 6 domain in the interval Pro-967 to Lys-1061. Residues Pro-1064 to Pro-1159 form the Fibronectin type-III 3 domain. Positions Pro-1177–Gln-1270 constitute an Ig-like C2-type 7 domain. The residue at position 1237 (Arg-1237) is an Omega-N-methylarginine.

Belongs to the immunoglobulin superfamily. MyBP family. In terms of processing, substrate for phosphorylation by PKA and PKC. Reversible phosphorylation appears to modulate contraction. Polyubiquitinated.

Its function is as follows. Thick filament-associated protein located in the crossbridge region of vertebrate striated muscle a bands. In vitro it binds MHC, F-actin and native thin filaments, and modifies the activity of actin-activated myosin ATPase. It may modulate muscle contraction or may play a more structural role. The protein is Myosin-binding protein C, cardiac-type (Mybpc3) of Mus musculus (Mouse).